A 317-amino-acid polypeptide reads, in one-letter code: Melanocyte-stimulating hormone receptor (317 aa).

Over 1–37 (MPVQGSQRRLLGSLNSTPTATPHLGLAANQTGAWCLE) the chain is Extracellular. Residue Asn-29 is glycosylated (N-linked (GlcNAc...) asparagine). The chain crosses the membrane as a helical span at residues 38-63 (VSIPDGLFLSLGLVSLVENVLVVTAI). Topologically, residues 64–72 (AKNRNLHSP) are cytoplasmic. Residues 73 to 93 (MYCFICCLALSDLLVSGSNML) form a helical membrane-spanning segment. At 94 to 118 (ETAVTLLLEAGALAARAAVVQQLDN) the chain is on the extracellular side. The helical transmembrane segment at 119 to 140 (VIDVITCSSMLSSLCFLGAIAV) threads the bilayer. At 141–163 (DRYISIFYALRYHSIVTLPRARR) the chain is on the cytoplasmic side. The chain crosses the membrane as a helical span at residues 164–183 (AVAAIWVASVLFSMLFIAYY). Topologically, residues 184-191 (DHAAVLLC) are extracellular. The helical transmembrane segment at 192-211 (LVVFFLAMLVLMAVLYVHML) threads the bilayer. Over 212-240 (ARACQHAQGIARLHKRQRPAHQGFGLKGA) the chain is Cytoplasmic. The chain crosses the membrane as a helical span at residues 241–266 (ATLTILLGIFFLCWGPFFLHLTLIVL). Over 267 to 279 (CPQHPTCSCIFKN) the chain is Extracellular. A helical transmembrane segment spans residues 280 to 300 (FNLFLALIICNAIIDPLIYAF). Over 301-317 (RSQELRRTLKEVLLCSW) the chain is Cytoplasmic. A lipid anchor (S-palmitoyl cysteine) is attached at Cys-315.

This sequence belongs to the G-protein coupled receptor 1 family. In terms of assembly, interacts with MGRN1, but does not undergo MGRN1-mediated ubiquitination; this interaction competes with GNAS-binding and thus inhibits agonist-induced cAMP production. Interacts with OPN3; the interaction results in a decrease in MC1R-mediated cAMP signaling and ultimately a decrease in melanin production in melanocytes.

The protein localises to the cell membrane. Its function is as follows. Receptor for MSH (alpha, beta and gamma) and ACTH. The activity of this receptor is mediated by G proteins which activate adenylate cyclase. Mediates melanogenesis, the production of eumelanin (black/brown) and phaeomelanin (red/yellow), via regulation of cAMP signaling in melanocytes. The polypeptide is Melanocyte-stimulating hormone receptor (MC1R) (Allenopithecus nigroviridis (Allen's swamp monkey)).